Here is a 122-residue protein sequence, read N- to C-terminus: Large ribosomal subunit protein bL12 (122 aa).

Belongs to the bacterial ribosomal protein bL12 family. As to quaternary structure, homodimer. Part of the ribosomal stalk of the 50S ribosomal subunit. Forms a multimeric L10(L12)X complex, where L10 forms an elongated spine to which 2 to 4 L12 dimers bind in a sequential fashion. Binds GTP-bound translation factors.

Its function is as follows. Forms part of the ribosomal stalk which helps the ribosome interact with GTP-bound translation factors. Is thus essential for accurate translation. This Pseudomonas aeruginosa (strain LESB58) protein is Large ribosomal subunit protein bL12.